The primary structure comprises 136 residues: Large ribosomal subunit protein uL16 (136 aa).

It belongs to the universal ribosomal protein uL16 family. Part of the 50S ribosomal subunit.

Binds 23S rRNA and is also seen to make contacts with the A and possibly P site tRNAs. The sequence is that of Large ribosomal subunit protein uL16 from Hamiltonella defensa subsp. Acyrthosiphon pisum (strain 5AT).